Reading from the N-terminus, the 89-residue chain is Large ribosomal subunit protein uL24 (89 aa).

Belongs to the universal ribosomal protein uL24 family. As to quaternary structure, part of the 50S ribosomal subunit.

Functionally, one of two assembly initiator proteins, it binds directly to the 5'-end of the 23S rRNA, where it nucleates assembly of the 50S subunit. In terms of biological role, one of the proteins that surrounds the polypeptide exit tunnel on the outside of the subunit. In Oenococcus oeni (strain ATCC BAA-331 / PSU-1), this protein is Large ribosomal subunit protein uL24.